The chain runs to 237 residues: Ribonuclease 3 (237 aa).

In terms of domain architecture, RNase III spans 4–133; it reads LTELEKSLGV…VLAAIYLDKG (130 aa). Glu-46 is a binding site for Mg(2+). Residues Asp-50 and Glu-122 contribute to the active site. Glu-122 provides a ligand contact to Mg(2+). A DRBM domain is found at 160–229; it reads DYKSRLQELV…AKEALQQFEN (70 aa).

The protein belongs to the ribonuclease III family. In terms of assembly, homodimer. It depends on Mg(2+) as a cofactor.

The protein resides in the cytoplasm. It catalyses the reaction Endonucleolytic cleavage to 5'-phosphomonoester.. Functionally, digests double-stranded RNA. Involved in the processing of primary rRNA transcript to yield the immediate precursors to the large and small rRNAs (23S and 16S). Processes some mRNAs, and tRNAs when they are encoded in the rRNA operon. Processes pre-crRNA and tracrRNA of type II CRISPR loci if present in the organism. The polypeptide is Ribonuclease 3 (Dehalococcoides mccartyi (strain ATCC BAA-2266 / KCTC 15142 / 195) (Dehalococcoides ethenogenes (strain 195))).